The chain runs to 2151 residues: Polycystin-1-like protein 3 (2151 aa).

The N-terminal stretch at 1–20 is a signal peptide; it reads MLLQRRSWLWLYIRIGVILG. Topologically, residues 25 to 1073 are extracellular; the sequence is RKPSIREQHG…IKLLLHVTNN (1049 aa). A C-type lectin domain is found at 34–142; it reads GGNSCYQLNR…CIEKHHFICQ (109 aa). Disulfide bonds link Cys-55–Cys-141 and Cys-116–Cys-133. N-linked (GlcNAc...) asparagine glycosylation is present at Asn-89. The segment covering 222 to 245 has biased composition (polar residues); sequence SLTGRPQVTSDTLASSSPPQGTSD. The disordered stretch occupies residues 222–609; it reads SLTGRPQVTS…SSSPPWPVIT (388 aa). The span at 246–348 shows a compositional bias: low complexity; it reads TPASSSPPQV…ASSSPPQGTS (103 aa). Polar residues-rich tracts occupy residues 349 to 363 and 371 to 600; these read DTPASSSPPQGTLDT and QGTS…TPAS. Asn-566, Asn-579, Asn-592, Asn-913, and Asn-951 each carry an N-linked (GlcNAc...) asparagine glycan. Positions 899 to 1061 constitute a GAIN-B domain; the sequence is TSLNTSTDHF…FIVPRTVDVE (163 aa). Intrachain disulfides connect Cys-1011–Cys-1039 and Cys-1026–Cys-1041. The GPS stretch occupies residues 1011-1061; it reads CYFWDRYNRTWKSDGCQVGPKSTILKTQCLCDHLTFFSSDFFIVPRTVDVE. The interval 1045–1061 is stachel; sequence TFFSSDFFIVPRTVDVE. A helical membrane pass occupies residues 1074–1094; it reads PVGVSLLSSLLGFYILLAMWA. Topologically, residues 1095-1283 are cytoplasmic; that stretch reads SRKDREDMQK…NQFTRVQRLS (189 aa). In terms of domain architecture, PLAT spans 1119–1236; that stretch reads SHYLIQVYTG…GNCERDRVFT (118 aa). A helical transmembrane segment spans residues 1284–1304; sequence CCMALLLCDMVINIMFWKMGG. Over 1305–1320 the chain is Extracellular; sequence TTAKRGTEQLGPLAVT. A helical membrane pass occupies residues 1321-1341; it reads LSELLVSIQTSIILFPIHLIF. Residues 1342–1533 lie on the Cytoplasmic side of the membrane; the sequence is GRLFQLIHPP…FCLFRWLKCS (192 aa). Residues 1534 to 1554 form a helical membrane-spanning segment; the sequence is CWLLLGVISLASAFFITLYSL. The Extracellular segment spans residues 1555–1575; the sequence is ELDKDQATSWVISMMLSVLQD. The helical transmembrane segment at 1576–1596 threads the bilayer; that stretch reads IFISQPIKVIFLTLLFSLMAN. The Cytoplasmic segment spans residues 1597 to 1665; it reads HMPWLNKDKE…KLTGGTLVQI (69 aa). A helical membrane pass occupies residues 1666–1676; the sequence is LFLTLLMTTVY. Residues 1677–1892 lie on the Extracellular side of the membrane; sequence SAKDSSRFFL…SLTSLQSSER (216 aa). 2 N-linked (GlcNAc) asparagine glycosylation sites follow: Asn-1712 and Asn-1822. Residues 1893 to 1921 traverse the membrane as a helical segment; sequence GFAWIVSQVVYYLLVCYYAFIQGCRLKRQ. At 1922-1930 the chain is on the cytoplasmic side; it reads RLAFFTRKR. Residues 1931–1949 form a helical membrane-spanning segment; that stretch reads NLLDTSIVLISFSILGLSM. The Extracellular segment spans residues 1950–1980; sequence QSLSLLHKKMQQYHCDRDRFISFYEALRVNS. Residues 1981–2002 traverse the membrane as a helical segment; it reads AVTHLRGFLLLFATVRVWDLLR. Topologically, residues 2003-2019 are cytoplasmic; it reads HHAQLQVINKTLSKAWD. The chain crosses the membrane as a helical span at residues 2020 to 2044; the sequence is EVLGFILIIVVLLSSYAMTFNLLFG. Residues 2043–2081 form a channel pore-region region; it reads FGWSISDYQSFFRSIVTVVGLLMGTSKHKEVIALYPILG. Topologically, residues 2045–2077 are extracellular; the sequence is WSISDYQSFFRSIVTVVGLLMGTSKHKEVIALY. Residues 2078-2097 form a helical membrane-spanning segment; sequence PILGSLLVLSSIILMGLVII. The Cytoplasmic segment spans residues 2098 to 2151; sequence NLFVSAILIAFGKERKACEKEATLTDMLLQKLSSLLGIRLHQNPSEEHADNTGY.

Belongs to the polycystin family. As to quaternary structure, heterotetramer with PKD2L1, composed of 3 subunit of PKD2L1 and 1 subunit of PKD1L3. In terms of processing, autoproteolytically processed at the GPS region of the GAIN-B domain; this cleavage modulates receptor activity. In terms of tissue distribution, expressed in a subset of taste receptor cells (type III taste cells) distinct from those involved in bitter, sweet and umami taste. Expressed in circumvallate and foliate taste buds, but not in surrounding non-gustatory lingual epithelium cells. Expressed in testis.

It is found in the cell membrane. It carries out the reaction Ca(2+)(in) = Ca(2+)(out). The catalysed reaction is Na(+)(in) = Na(+)(out). It catalyses the reaction K(+)(in) = K(+)(out). The enzyme catalyses Mg(2+)(in) = Mg(2+)(out). The non-selective cation channel is gated following an off-response property by acid: gated open after the removal of acid stimulus, but not during acid application. Non-selective cation channel activity is inhibited by capsaicin. Regulation of non-selective cation channel activity by external Ca(2+) is bimodal, first sensitizing and subsequently inactivating the current. The apo (closed) heterotetramer has an asymmetric selectivity filter (SF) guarded by Lys-2069 in absence of Ca(2+). However, Ca(2+)-entrance to the SF vestibule is accompanied by a swing motion of Lys-2069 on PKD1L3. Functionally, pore-forming subunit of a heterotetrameric, non-selective cation channel that is permeable to Ca(2+). Also shows permeability towards NA(1+), K(+) and Mg(2+). Heterotetrameric complex channel is activated by external low pH and Ca(2+), but opens only when the extracellular pH rises again and after the removal of acid stimulus. May act as a sour taste receptor in gustatory cells; however, its contribution to sour taste perception is unclear in vivo and may be indirect. In Mus musculus (Mouse), this protein is Polycystin-1-like protein 3.